A 104-amino-acid chain; its full sequence is U-scoloptoxin(10)-Cw1a (104 aa).

The first 23 residues, 1–23 (MNKTVAVFFAVICVICVIKSCKT), serve as a signal peptide directing secretion.

It belongs to the scoloptoxin-10 family. Post-translationally, contains 3 disulfide bonds. Expressed by the venom gland.

The protein localises to the secreted. In Cormocephalus westwoodi (Westwood's green centipede), this protein is U-scoloptoxin(10)-Cw1a.